The primary structure comprises 1527 residues: Rho guanine nucleotide exchange factor 11 (1527 aa).

The disordered stretch occupies residues 1–56 (MSIRLPHSIDRSASKKQSHLSSPIASWLSSLSSLGDSTPERTSPSHHRQPSDTSET). A phosphoserine mark is found at serine 2, serine 30, serine 32, and serine 51. Residues 19 to 37 (HLSSPIASWLSSLSSLGDS) show a composition bias toward low complexity. The PDZ domain occupies 64 to 143 (CVIIQKDQHG…LTLLGSSPPS (80 aa)). Residues 216-247 (PCGETSQRTCEGRLSVDSQEADSGLDSGTERF) form a disordered region. A phosphoserine mark is found at serine 262 and serine 268. A Phosphothreonine modification is found at threonine 271. Residues serine 272 and serine 288 each carry the phosphoserine modification. The region spanning 323 to 503 (ESDIIFQDLE…NTFMSHAGIR (181 aa)) is the RGSL domain. Residues 461 to 487 (LRERQMAEKQLAALGDILSKYEEDRSA) adopt a coiled-coil conformation. 2 disordered regions span residues 506-569 (ESRS…QSIK) and 582-687 (NSHQ…GRRS). The segment covering 509–519 (SSCTAEKTQSA) has biased composition (polar residues). 2 stretches are compositionally biased toward basic and acidic residues: residues 539 to 551 (SKKE…DKKR) and 624 to 645 (KGRE…RSDV). Phosphoserine occurs at positions 643 and 671. Residues 656 to 672 (LHQSASSSASSLSTRSL) show a composition bias toward low complexity. 2 positions are modified to phosphothreonine: threonine 676 and threonine 680. Residues 742–931 (DRQEVINELF…REILKFVNEA (190 aa)) form the DH domain. Positions 973–1087 (KMIHEGPLTW…WMELLEEAVQ (115 aa)) constitute a PH domain. Disordered regions lie at residues 1090–1184 (TKHP…NRGI), 1231–1321 (QAAG…TEPA), and 1379–1411 (AGPL…PQPY). Residues 1126-1138 (EVYHTEKEPKKLP) are compositionally biased toward basic and acidic residues. The span at 1242-1251 (PTPSVVSITS) shows a compositional bias: polar residues. 2 positions are modified to phosphoserine: serine 1299 and serine 1304. Positions 1312–1321 (AAEAASTEPA) are enriched in low complexity. A phosphoserine mark is found at serine 1462 and serine 1463. Threonine 1467 and threonine 1480 each carry phosphothreonine. Residues 1480–1527 (TDYSLSPPAKEALASDSQNGQEQGSCPEEGSDIALEDSATDTAVSPGP) form a disordered region. Serine 1485 is subject to Phosphoserine. Positions 1494–1503 (SDSQNGQEQG) are enriched in polar residues. The span at 1508–1518 (EGSDIALEDSA) shows a compositional bias: acidic residues.

Interacts with RHOA, GNA13 and SLC1A6. Interacts with GNA12, PLXNB1 and PLXNB2. Interacts (via DH domain) with GCSAM (via C-terminus). Found in a complex with ARHGEF11 and ARHGEF12; binding to ARHGEF11 and ARHGEF12 enhances CDC42 GEF activity of PLEKHG4B, and PLEKHG4B, in turn, inhibits ARHGEF11- and ARHGEF12-mediated RHOA activation. Post-translationally, phosphorylated by MAP kinase p38 (MAPK11, MAPK12, MAPK13 and/or MAPK14). Ubiquitinated by the BCR(KLHL20) E3 ubiquitin ligase complex when previously phosphorylated by MAP kinase p38 (MAPK11, MAPK12, MAPK13 and/or MAPK14), leading to its degradation, thereby restricting RhoA activity and facilitating growth cone spreading and neurite outgrowth.

The protein localises to the cytoplasm. It is found in the membrane. May play a role in the regulation of RhoA GTPase by guanine nucleotide-binding alpha-12 (GNA12) and alpha-13 (GNA13). Acts as guanine nucleotide exchange factor (GEF) for RhoA GTPase and may act as GTPase-activating protein (GAP) for GNA12 and GNA13. Involved in neurotrophin-induced neurite outgrowth. This is Rho guanine nucleotide exchange factor 11 (Arhgef11) from Rattus norvegicus (Rat).